The sequence spans 132 residues: uncharacterized protein (132 aa).

3 helical membrane-spanning segments follow: residues 19 to 39 (FTWIFGAWDIPLITLLVFIFL), 58 to 78 (IGLRGITKKGLILVVLLVAVM), and 93 to 113 (LIAYFYIMNEGISILENCAAL).

It belongs to the bacteriophage holin family. Cp-1 holin subfamily.

Its subcellular location is the cell membrane. This is an uncharacterized protein from Clostridium perfringens.